Consider the following 235-residue polypeptide: Thaumatin I (235 aa).

Residues 1–22 (MAATTCFFFLFPFLLLLTLSRA) form the signal peptide. Disulfide bonds link C31–C226, C78–C88, C93–C99, C143–C215, C148–C199, C156–C167, C171–C180, and C181–C186. A propeptide spans 230-235 (LELEDE) (removed in mature form).

It belongs to the thaumatin family.

The protein localises to the cytoplasmic vesicle. In terms of biological role, taste-modifying protein; intensely sweet-tasting. It is 100000 times sweeter than sucrose on a molar basis. The polypeptide is Thaumatin I (Thaumatococcus daniellii (Katemfe)).